The chain runs to 495 residues: MTSRDGYQWTPETGLTQGVPSLGVISPPTNIEDTDKDGPWDVIVIGGGYCGLTATRDLTVAGFKTLLLEARDRIGGRSWSSNIDGYPYEMGGTWVHWHQSHVWREITRYKMHNALSPSFNFSRGVNHFQLRTNPTTSTYMTHEAEDELLRSALHKFTNVDGTNGRTVLPFPHDMFYVPEFRKYDEMSYSERIDQIRDELSLNERSSLEAFILLCSGGTLENSSFGEFLHWWAMSGYTYQGCMDCLISYKFKDGQSAFARRFWEEAAGTGRLGYVFGCPVRSVVNERDAARVTARDGREFAAKRLVCTIPLNVLSTIQFSPALSTERISAMQAGHVNMCTKVHAEVDNKDMRSWTGIAYPFNKLCYAIGDGTTPAGNTHLVCFGTDANHIQPDEDVRETLKAVGQLAPGTFGVKRLVFHNWVKDEFAKGAWFFSRPGMVSECLQGLREKHRGVVFANSDWALGWRSFIDGAIEEGTRAARVVLEELGTKREVKARL.

Residues 1-19 (MTSRDGYQWTPETGLTQGV) are compositionally biased toward polar residues. Residues 1-23 (MTSRDGYQWTPETGLTQGVPSLG) form a disordered region. A Microbody targeting signal motif is present at residues 493-495 (ARL).

It belongs to the flavin monoamine oxidase family. FAD is required as a cofactor.

It localises to the peroxisome. It catalyses the reaction a secondary aliphatic amine + O2 + H2O = a primary amine + an aldehyde + H2O2. The chain is Monoamine oxidase N (maoN) from Aspergillus niger.